A 261-amino-acid chain; its full sequence is Small ribosomal subunit protein uS2 (261 aa).

The protein belongs to the universal ribosomal protein uS2 family.

The polypeptide is Small ribosomal subunit protein uS2 (Rhodospirillum centenum (strain ATCC 51521 / SW)).